Consider the following 511-residue polypeptide: Acetylcholine receptor subunit alpha-type unc-38 (511 aa).

Positions 1–16 are cleaved as a signal peptide; the sequence is MRSFWLFLLLLLFCIS. The Extracellular portion of the chain corresponds to 17 to 261; sequence FIKLTEGNED…QLRRKPLFYT (245 aa). N-linked (GlcNAc...) asparagine glycosylation is present at Asn124. A disulfide bond links Cys151 and Cys165. A glycan (N-linked (GlcNAc...) asparagine) is linked at Asn202. A disulfide bridge connects residues Cys238 and Cys239. The next 3 membrane-spanning stretches (helical) occupy residues 262 to 282, 291 to 311, and 324 to 344; these read VNLVFPCVGISFLTILVFYLP, LCISILVALTIFFLLLTEIIP, and LLFTMVMVTLSVVVTVISLNL. The Cytoplasmic segment spans residues 345-464; the sequence is HFRTPTTHLM…WKYVAMVLDR (120 aa). The chain crosses the membrane as a helical span at residues 465–485; sequence LFLLIFSIACFVGTVIILLRA.

It belongs to the ligand-gated ion channel (TC 1.A.9) family. Acetylcholine receptor (TC 1.A.9.1) subfamily. In terms of assembly, component of nicotinic acetylcholine receptor. In muscles, composed of 2 non-alpha subunits lev-1 and unc-29, and 3 alpha subunits unc-38, unc-63 and lev-8. In cholinergic motoneurons, composed of 2 non-alpha subunits acr-2 and acr-3, and 3 alpha subunits unc-38, unc-63 and acr-12.

The protein localises to the postsynaptic cell membrane. It localises to the cell membrane. Functionally, alpha subunit of nicotinic acetylcholine receptor (nAChR). Probably acts in cholinergic motoneurons to regulate presynaptic neurotransmitter release, thereby ensuring normal level of excitation of cholinergic motoneurons during locomotion. Involved in nAChR sensitivity to nicotine. This chain is Acetylcholine receptor subunit alpha-type unc-38 (unc-38), found in Caenorhabditis elegans.